The sequence spans 466 residues: Ribulose bisphosphate carboxylase large chain (466 aa).

N6,N6,N6-trimethyllysine is present on Lys4. Residues Asn113 and Thr163 each coordinate substrate. The active-site Proton acceptor is Lys165. Lys167 serves as a coordination point for substrate. Positions 191, 193, and 194 each coordinate Mg(2+). Position 191 is an N6-carboxylysine (Lys191). His284 acts as the Proton acceptor in catalysis. Substrate is bound by residues Arg285, His317, and Ser369.

Belongs to the RuBisCO large chain family. Type I subfamily. In terms of assembly, heterohexadecamer of 8 large chains and 8 small chains; disulfide-linked. The disulfide link is formed within the large subunit homodimers. Requires Mg(2+) as cofactor. The disulfide bond which can form in the large chain dimeric partners within the hexadecamer appears to be associated with oxidative stress and protein turnover.

It is found in the plastid. The protein resides in the chloroplast. It carries out the reaction 2 (2R)-3-phosphoglycerate + 2 H(+) = D-ribulose 1,5-bisphosphate + CO2 + H2O. The enzyme catalyses D-ribulose 1,5-bisphosphate + O2 = 2-phosphoglycolate + (2R)-3-phosphoglycerate + 2 H(+). Functionally, ruBisCO catalyzes two reactions: the carboxylation of D-ribulose 1,5-bisphosphate, the primary event in carbon dioxide fixation, as well as the oxidative fragmentation of the pentose substrate in the photorespiration process. Both reactions occur simultaneously and in competition at the same active site. The sequence is that of Ribulose bisphosphate carboxylase large chain from Drimys winteri (Winter's bark).